The following is a 336-amino-acid chain: DNA topoisomerase 1B (336 aa).

Residues Glu-79–Glu-336 enclose the Topo IB-type catalytic domain. Residue Tyr-294 is the O-(3'-phospho-DNA)-tyrosine intermediate of the active site.

The protein belongs to the type IB topoisomerase family. As to quaternary structure, monomer.

Its subcellular location is the virion. It catalyses the reaction ATP-independent breakage of single-stranded DNA, followed by passage and rejoining.. Functionally, releases the supercoiling and torsional tension of DNA introduced during the DNA replication and transcription by transiently cleaving and rejoining one strand of the DNA duplex. Introduces a single-strand break via transesterification at a target site in duplex DNA. The scissile phosphodiester is attacked by the catalytic tyrosine of the enzyme, resulting in the formation of a DNA-(3'-phosphotyrosyl)-enzyme intermediate and the expulsion of a 5'-OH DNA strand. The free DNA strand then undergoes passage around the unbroken strand thus removing DNA supercoils. Finally, in the religation step, the DNA 5'-OH attacks the covalent intermediate to expel the active-site tyrosine and restore the DNA phosphodiester backbone. Cleaves DNA after CCCTT sequence. The chain is DNA topoisomerase 1B (TOP1E) from Acanthamoeba polyphaga mimivirus (APMV).